A 341-amino-acid polypeptide reads, in one-letter code: Biotin synthase (341 aa).

Residues 56-285 enclose the Radical SAM core domain; that stretch reads ADIQRAALLS…KARVRLSAGR (230 aa). 3 residues coordinate [4Fe-4S] cluster: cysteine 71, cysteine 75, and cysteine 78. Positions 116, 148, 208, and 280 each coordinate [2Fe-2S] cluster.

Belongs to the radical SAM superfamily. Biotin synthase family. Homodimer. [4Fe-4S] cluster serves as cofactor. The cofactor is [2Fe-2S] cluster.

It catalyses the reaction (4R,5S)-dethiobiotin + (sulfur carrier)-SH + 2 reduced [2Fe-2S]-[ferredoxin] + 2 S-adenosyl-L-methionine = (sulfur carrier)-H + biotin + 2 5'-deoxyadenosine + 2 L-methionine + 2 oxidized [2Fe-2S]-[ferredoxin]. The protein operates within cofactor biosynthesis; biotin biosynthesis; biotin from 7,8-diaminononanoate: step 2/2. In terms of biological role, catalyzes the conversion of dethiobiotin (DTB) to biotin by the insertion of a sulfur atom into dethiobiotin via a radical-based mechanism. The sequence is that of Biotin synthase from Methylorubrum populi (strain ATCC BAA-705 / NCIMB 13946 / BJ001) (Methylobacterium populi).